A 336-amino-acid polypeptide reads, in one-letter code: Biotin synthase (336 aa).

In terms of domain architecture, Radical SAM core spans 52 to 279 (KAIQLSTLMS…KSYVRLSAGR (228 aa)). [4Fe-4S] cluster contacts are provided by cysteine 67, cysteine 71, and cysteine 74. Positions 111, 142, 202, and 274 each coordinate [2Fe-2S] cluster.

The protein belongs to the radical SAM superfamily. Biotin synthase family. As to quaternary structure, homodimer. Requires [4Fe-4S] cluster as cofactor. It depends on [2Fe-2S] cluster as a cofactor.

It carries out the reaction (4R,5S)-dethiobiotin + (sulfur carrier)-SH + 2 reduced [2Fe-2S]-[ferredoxin] + 2 S-adenosyl-L-methionine = (sulfur carrier)-H + biotin + 2 5'-deoxyadenosine + 2 L-methionine + 2 oxidized [2Fe-2S]-[ferredoxin]. It participates in cofactor biosynthesis; biotin biosynthesis; biotin from 7,8-diaminononanoate: step 2/2. Catalyzes the conversion of dethiobiotin (DTB) to biotin by the insertion of a sulfur atom into dethiobiotin via a radical-based mechanism. This is Biotin synthase from Pasteurella multocida (strain Pm70).